The chain runs to 204 residues: Urease accessory protein UreG (204 aa).

Position 15 to 22 (15 to 22 (GPVGSGKT)) interacts with GTP.

It belongs to the SIMIBI class G3E GTPase family. UreG subfamily. In terms of assembly, homodimer. UreD, UreF and UreG form a complex that acts as a GTP-hydrolysis-dependent molecular chaperone, activating the urease apoprotein by helping to assemble the nickel containing metallocenter of UreC. The UreE protein probably delivers the nickel.

It localises to the cytoplasm. Functionally, facilitates the functional incorporation of the urease nickel metallocenter. This process requires GTP hydrolysis, probably effectuated by UreG. The chain is Urease accessory protein UreG from Methylobacterium nodulans (strain LMG 21967 / CNCM I-2342 / ORS 2060).